The primary structure comprises 102 residues: MDKVMRMSSEKGVVIFTKSSCCLCYAVQILFRDLRVQPTIHEIDNDPDCREIEKALLRLGCSTAVPAVFVGGKLVGSTNEVMSLHLSGSLVPLIKPYQSILY.

One can recognise a Glutaredoxin domain in the interval 1–101 (MDKVMRMSSE…PLIKPYQSIL (101 aa)). An intrachain disulfide couples cysteine 21 to cysteine 24.

It belongs to the glutaredoxin family. CC-type subfamily.

Its subcellular location is the cytoplasm. Its function is as follows. Has a glutathione-disulfide oxidoreductase activity in the presence of NADPH and glutathione reductase. Reduces low molecular weight disulfides and proteins. The polypeptide is Glutaredoxin-C13 (GRXC13) (Arabidopsis thaliana (Mouse-ear cress)).